Reading from the N-terminus, the 196-residue chain is Dephospho-CoA kinase (196 aa).

One can recognise a DPCK domain in the interval 6–196 (AIALTGGIGT…QVERFLKTLL (191 aa)). Position 14-19 (14-19 (GTGKST)) interacts with ATP.

This sequence belongs to the CoaE family.

Its subcellular location is the cytoplasm. The enzyme catalyses 3'-dephospho-CoA + ATP = ADP + CoA + H(+). Its pathway is cofactor biosynthesis; coenzyme A biosynthesis; CoA from (R)-pantothenate: step 5/5. In terms of biological role, catalyzes the phosphorylation of the 3'-hydroxyl group of dephosphocoenzyme A to form coenzyme A. In Helicobacter pylori (strain ATCC 700392 / 26695) (Campylobacter pylori), this protein is Dephospho-CoA kinase.